Here is a 254-residue protein sequence, read N- to C-terminus: 5'-nucleotidase SurE (254 aa).

4 residues coordinate a divalent metal cation: aspartate 8, aspartate 9, serine 39, and asparagine 91.

The protein belongs to the SurE nucleotidase family. Requires a divalent metal cation as cofactor.

Its subcellular location is the cytoplasm. The enzyme catalyses a ribonucleoside 5'-phosphate + H2O = a ribonucleoside + phosphate. In terms of biological role, nucleotidase that shows phosphatase activity on nucleoside 5'-monophosphates. In Pseudoalteromonas translucida (strain TAC 125), this protein is 5'-nucleotidase SurE.